The chain runs to 119 residues: Large ribosomal subunit protein bL20 (119 aa).

Belongs to the bacterial ribosomal protein bL20 family.

Binds directly to 23S ribosomal RNA and is necessary for the in vitro assembly process of the 50S ribosomal subunit. It is not involved in the protein synthesizing functions of that subunit. This chain is Large ribosomal subunit protein bL20, found in Streptococcus uberis (strain ATCC BAA-854 / 0140J).